Here is a 389-residue protein sequence, read N- to C-terminus: Chalcone synthase 1A (389 aa).

Residue Cys164 is part of the active site.

This sequence belongs to the thiolase-like superfamily. Chalcone/stilbene synthases family.

It catalyses the reaction (E)-4-coumaroyl-CoA + 3 malonyl-CoA + 3 H(+) = 2',4,4',6'-tetrahydroxychalcone + 3 CO2 + 4 CoA. It functions in the pathway secondary metabolite biosynthesis; flavonoid biosynthesis. The primary product of this enzyme is 4,2',4',6'-tetrahydroxychalcone (also termed naringenin-chalcone or chalcone) which can under specific conditions spontaneously isomerize into naringenin. The sequence is that of Chalcone synthase 1A (CHS-1A) from Pisum sativum (Garden pea).